Reading from the N-terminus, the 135-residue chain is uncharacterized protein (135 aa).

The Response regulatory domain occupies 13-129 (QVLIAENSRF…KILEKVNAAI (117 aa)). A 4-aspartylphosphate modification is found at Asp64.

This is an uncharacterized protein from Leptospira interrogans serogroup Icterohaemorrhagiae serovar copenhageni (strain Fiocruz L1-130).